We begin with the raw amino-acid sequence, 443 residues long: Xaa-Pro dipeptidase (443 aa).

Mn(2+) is bound by residues Asp246, Asp257, His339, Glu384, and Glu423.

This sequence belongs to the peptidase M24B family. Bacterial-type prolidase subfamily. It depends on Mn(2+) as a cofactor.

The catalysed reaction is Xaa-L-Pro dipeptide + H2O = an L-alpha-amino acid + L-proline. Its function is as follows. Splits dipeptides with a prolyl residue in the C-terminal position. In Serratia proteamaculans (strain 568), this protein is Xaa-Pro dipeptidase.